The primary structure comprises 173 residues: Translation initiation factor IF-3 (173 aa).

This sequence belongs to the IF-3 family. In terms of assembly, monomer.

It is found in the cytoplasm. Its function is as follows. IF-3 binds to the 30S ribosomal subunit and shifts the equilibrium between 70S ribosomes and their 50S and 30S subunits in favor of the free subunits, thus enhancing the availability of 30S subunits on which protein synthesis initiation begins. The protein is Translation initiation factor IF-3 of Bacillus subtilis (strain 168).